The following is a 664-amino-acid chain: Putative membrane protein Bcell_0381 (664 aa).

Over residues 588-616 the composition is skewed to acidic residues; sequence DVTQDENGEEKSEEDNKEEIVEENTEEDN. Residues 588 to 622 form a disordered region; it reads DVTQDENGEEKSEEDNKEEIVEENTEEDNKEEKTI. Residues 636–656 form a helical membrane-spanning segment; that stretch reads YQFLLAGIIMLVGGSCIYVFY.

It is found in the cell membrane. In Evansella cellulosilytica (strain ATCC 21833 / DSM 2522 / FERM P-1141 / JCM 9156 / N-4) (Bacillus cellulosilyticus), this protein is Putative membrane protein Bcell_0381.